The primary structure comprises 108 residues: MKKNTHPNYQQVLFVDSSTGYKFVCGSTYQSDKTEVFEGQEYPVCYVSVSSASHPFFTGSKRLVDAEGRVDKFLKRYSNVKPAQPAQAAVEEAPAVKSKKKAPIKKKK.

The disordered stretch occupies residues 88-108 (AAVEEAPAVKSKKKAPIKKKK). Residues 97–108 (KSKKKAPIKKKK) are compositionally biased toward basic residues.

Belongs to the bacterial ribosomal protein bL31 family. Type B subfamily. Part of the 50S ribosomal subunit.

The protein is Large ribosomal subunit protein bL31B of Chlamydia abortus (strain DSM 27085 / S26/3) (Chlamydophila abortus).